An 85-amino-acid chain; its full sequence is YcgL domain-containing protein ECA2367 (85 aa).

The YcgL domain occupies 1-85 (MFCVIYRSVK…PVESLLTTPV (85 aa)).

The chain is YcgL domain-containing protein ECA2367 from Pectobacterium atrosepticum (strain SCRI 1043 / ATCC BAA-672) (Erwinia carotovora subsp. atroseptica).